Here is a 373-residue protein sequence, read N- to C-terminus: tRNA (guanine(26)-N(2))-dimethyltransferase (373 aa).

Residues 2–365 (KIISEGETKL…AELSDLVVLI (364 aa)) form the Trm1 methyltransferase domain. Positions 35, 66, 86, 113, and 114 each coordinate S-adenosyl-L-methionine.

The protein belongs to the class I-like SAM-binding methyltransferase superfamily. Trm1 family.

The enzyme catalyses guanosine(26) in tRNA + 2 S-adenosyl-L-methionine = N(2)-dimethylguanosine(26) in tRNA + 2 S-adenosyl-L-homocysteine + 2 H(+). In terms of biological role, dimethylates a single guanine residue at position 26 of a number of tRNAs using S-adenosyl-L-methionine as donor of the methyl groups. The protein is tRNA (guanine(26)-N(2))-dimethyltransferase of Methanococcus maripaludis (strain C6 / ATCC BAA-1332).